Here is a 181-residue protein sequence, read N- to C-terminus: ECF RNA polymerase sigma factor RpoE (181 aa).

Positions leucine 29–arginine 96 are sigma-70 factor domain-2. An Interaction with polymerase core subunit RpoC motif is present at residues glutamate 53–glutamine 56. The tract at residues alanine 129–glutamine 178 is sigma-70 factor domain-4. Residues histidine 151–arginine 170 constitute a DNA-binding region (H-T-H motif).

This sequence belongs to the sigma-70 factor family. ECF subfamily. As to quaternary structure, interacts transiently with the RNA polymerase catalytic core formed by RpoA, RpoB, RpoC and RpoZ (2 alpha, 1 beta, 1 beta' and 1 omega subunit) to form the RNA polymerase holoenzyme that can initiate transcription. Forms a 1:1 complex (via sigma-70 factor domain 4) with anti-sigma factor ChrR; this inhibits the interaction of RpoE with the RNA polymerase catalytic core.

In terms of biological role, sigma factors are initiation factors that promote the attachment of RNA polymerase to specific initiation sites and are then released. Extracytoplasmic function (ECF) sigma factors are held in an inactive form by a cognate anti-sigma factor until released. Sigma-E controls a transcriptional response to singlet oxygen, a by-product of photosynthesis; its continuous activity requires constant exposure to singlet oxygen. The regulon has about 180 genes that protect against or repair damage induced by singlet oxygen, including itself and rpoH2, a heat shock-responsive sigma factor. The sequence is that of ECF RNA polymerase sigma factor RpoE (rpoE) from Cereibacter sphaeroides (strain ATCC 17023 / DSM 158 / JCM 6121 / CCUG 31486 / LMG 2827 / NBRC 12203 / NCIMB 8253 / ATH 2.4.1.) (Rhodobacter sphaeroides).